The sequence spans 534 residues: UDP-glucuronosyltransferase 1A3 (534 aa).

An N-terminal signal peptide occupies residues 1–28; sequence MATGLQVPLPWLATGLLLLLSVQPWAES. 4 N-linked (GlcNAc...) asparagine glycosylation sites follow: Asn-119, Asn-142, Asn-296, and Asn-348. Residues 492-508 traverse the membrane as a helical segment; it reads VIGFLLAVVLTVAFITF.

Belongs to the UDP-glycosyltransferase family. Homodimer. Homooligomer. Interacts with UGT1A1, UGT1A4, UGT1A6, UGT1A7, UGT1A8, UGT1A9 and UGT1A10 to form heterodimers. Isoform 1 interacts with isoform 2/i2 suggesting that oligomerization is involved in negative regulation of transferase activity by isoform 2. Isoform 1 also interacts with respective i2 isoforms of UGT1A1, UGT1A4, UGT1A6, UGT1A7, UGT1A8, UGT1A9 and UGT1A10. Expressed in liver, kidney, colon, esophagus and small intestine. As to expression, expressed in liver, kidney and colon. Not expressed in esophagus and small intestine.

Its subcellular location is the endoplasmic reticulum membrane. The catalysed reaction is glucuronate acceptor + UDP-alpha-D-glucuronate = acceptor beta-D-glucuronoside + UDP + H(+). It catalyses the reaction 17beta-estradiol + UDP-alpha-D-glucuronate = 17beta-estradiol 3-O-(beta-D-glucuronate) + UDP + H(+). It carries out the reaction 17beta-estradiol + UDP-alpha-D-glucuronate = 17beta-estradiol 17-O-(beta-D-glucuronate) + UDP + H(+). The enzyme catalyses 17alpha-estradiol + UDP-alpha-D-glucuronate = 17alpha-estradiol 3-O-(beta-D-glucuronate) + UDP + H(+). The catalysed reaction is estrone + UDP-alpha-D-glucuronate = estrone 3-O-(beta-D-glucuronate) + UDP + H(+). It catalyses the reaction chenodeoxycholate + UDP-alpha-D-glucuronate = chenodeoxycholoyl-24-O-(beta-D-glucuronate) + UDP. It carries out the reaction deoxycholate + UDP-alpha-D-glucuronate = deoxycholoyl-24-O-(beta-D-glucuronate) + UDP. The enzyme catalyses lithocholate + UDP-alpha-D-glucuronate = lithocholoyl-24-O-(beta-D-glucuronate) + UDP. The catalysed reaction is hyodeoxycholate + UDP-alpha-D-glucuronate = hyodeoxycholoyl-24-O-(beta-D-glucuronate) + UDP. It catalyses the reaction hyocholate + UDP-alpha-D-glucuronate = hyocholoyl-24-O-(beta-D-glucuronate) + UDP. It carries out the reaction calcidiol + UDP-alpha-D-glucuronate = calcidiol 25-O-(beta-D-glucuronide) + UDP + H(+). The enzyme catalyses (E)-ferulate + UDP-alpha-D-glucuronate = (E)-4-O-(beta-D-glucuronosyl)-ferulate + UDP + H(+). The catalysed reaction is (E)-ferulate + UDP-alpha-D-glucuronate = (E)-ferulic acid beta-D-glucuronate ester + UDP. It catalyses the reaction losartan + UDP-alpha-D-glucuronate = losartan-2-N-beta-D-glucuronide + UDP. It carries out the reaction candesartan + UDP-alpha-D-glucuronate = candesartan-2-N-beta-D-glucuronide + UDP. The enzyme catalyses zolasartan + UDP-alpha-D-glucuronate = zolarsartan-2-N-beta-D-glucuronide + UDP. Its function is as follows. UDP-glucuronosyltransferase (UGT) that catalyzes phase II biotransformation reactions in which lipophilic substrates are conjugated with glucuronic acid to increase the metabolite's water solubility, thereby facilitating excretion into either the urine or bile. Essential for the elimination and detoxification of drugs, xenobiotics and endogenous compounds. Catalyzes the glucuronidation of endogenous estrogen hormones such as estradiol and estrone. Contributes to bile acid (BA) detoxification by catalyzing the glucuronidation of BA substrates, which are natural detergents for dietary lipids absorption. Involved in the glucuronidation of calcidiol, which is the major circulating form of vitamin D3, essential for the regulation of calcium and phosphate homeostasis. Involved in the glucuronidation of the phytochemical ferulic acid at the phenolic or the carboxylic acid group. Involved in the glucuronidation of the AGTR1 angiotensin receptor antagonists losartan, candesartan and zolarsartan, which can inhibit the effect of angiotensin II. Lacks UDP-glucuronosyltransferase (UGT) activity but acts as a negative regulator of isoform 1. This is UDP-glucuronosyltransferase 1A3 from Homo sapiens (Human).